The following is a 169-amino-acid chain: Ribosome maturation factor RimM (169 aa).

The PRC barrel domain occupies 97 to 169; that stretch reads EDEYYWADLV…TITADWGLDY (73 aa).

This sequence belongs to the RimM family. In terms of assembly, binds ribosomal protein uS19.

It localises to the cytoplasm. In terms of biological role, an accessory protein needed during the final step in the assembly of 30S ribosomal subunit, possibly for assembly of the head region. Essential for efficient processing of 16S rRNA. May be needed both before and after RbfA during the maturation of 16S rRNA. It has affinity for free ribosomal 30S subunits but not for 70S ribosomes. The protein is Ribosome maturation factor RimM of Neisseria gonorrhoeae (strain ATCC 700825 / FA 1090).